An 87-amino-acid chain; its full sequence is Bombyxin B-10 (87 aa).

Residues 1–19 (MKTILIFLVVISLMYSGEA) form the signal peptide. Cystine bridges form between Cys-27/Cys-73, Cys-39/Cys-86, and Cys-72/Cys-77. Residues 46–64 (SGAQYAPYFWTRQYLGSRG) constitute a propeptide, bombyxin B-10 C peptide.

The protein belongs to the insulin family. As to quaternary structure, heterodimer of a B chain and an A chain linked by two disulfide bonds.

It is found in the secreted. Its function is as follows. Brain peptide responsible for activation of prothoracic glands to produce ecdysone in insects. The polypeptide is Bombyxin B-10 (BBXB10) (Bombyx mori (Silk moth)).